The sequence spans 375 residues: Amylovoran biosynthesis protein AmsC (375 aa).

A run of 9 helical transmembrane segments spans residues alanine 2 to isoleucine 22, lysine 31 to isoleucine 51, methionine 93 to isoleucine 113, isoleucine 162 to leucine 182, leucine 208 to phenylalanine 228, valine 256 to phenylalanine 276, valine 287 to phenylalanine 307, isoleucine 309 to leucine 329, and leucine 337 to leucine 357.

It is found in the cell membrane. The protein operates within glycan metabolism; exopolysaccharide biosynthesis. Its function is as follows. Involved in the biosynthesis of amylovoran which functions as a virulence factor. The polypeptide is Amylovoran biosynthesis protein AmsC (amsC) (Erwinia amylovora (Fire blight bacteria)).